The following is a 587-amino-acid chain: Probable phosphoribomutase (587 aa).

Substrate contacts are provided by residues Thr49, Arg53, and 149–150 (SH). The Phosphoserine intermediate role is filled by Ser149. Mg(2+)-binding residues include Ser149, Asp306, Asp308, and Asp310. At Ser149 the chain carries Phosphoserine. Residues 310-311 (DR), Thr380, 404-406 (EEA), and Lys418 contribute to the substrate site.

Belongs to the phosphohexose mutase family. Mg(2+) is required as a cofactor.

It localises to the cytoplasm. Its subcellular location is the nucleus. The enzyme catalyses alpha-D-ribose 1-phosphate = D-ribose 5-phosphate. Its function is as follows. Converts ribose 1-phosphate to ribose 5-phosphate. Involved in ribose salvage via the pentose phosphate pathway. This is Probable phosphoribomutase from Schizosaccharomyces pombe (strain 972 / ATCC 24843) (Fission yeast).